A 203-amino-acid polypeptide reads, in one-letter code: Histidine biosynthesis bifunctional protein HisIE (203 aa).

The tract at residues 1 to 114 (MLTEQQRREL…FGDTAHQWLF (114 aa)) is phosphoribosyl-AMP cyclohydrolase. A phosphoribosyl-ATP pyrophosphohydrolase region spans residues 115 to 203 (LYQLEQLLAE…VIENLRKRHQ (89 aa)).

It in the N-terminal section; belongs to the PRA-CH family. This sequence in the C-terminal section; belongs to the PRA-PH family.

The protein localises to the cytoplasm. The enzyme catalyses 1-(5-phospho-beta-D-ribosyl)-ATP + H2O = 1-(5-phospho-beta-D-ribosyl)-5'-AMP + diphosphate + H(+). The catalysed reaction is 1-(5-phospho-beta-D-ribosyl)-5'-AMP + H2O = 1-(5-phospho-beta-D-ribosyl)-5-[(5-phospho-beta-D-ribosylamino)methylideneamino]imidazole-4-carboxamide. The protein operates within amino-acid biosynthesis; L-histidine biosynthesis; L-histidine from 5-phospho-alpha-D-ribose 1-diphosphate: step 2/9. It participates in amino-acid biosynthesis; L-histidine biosynthesis; L-histidine from 5-phospho-alpha-D-ribose 1-diphosphate: step 3/9. This chain is Histidine biosynthesis bifunctional protein HisIE, found in Shigella sonnei (strain Ss046).